The chain runs to 370 residues: Asporin (370 aa).

Residues 1-15 form the signal peptide; the sequence is MKVYVLLVFLTLCSA. Serine 45 carries O-linked (GalNAc...) serine glycosylation. One can recognise an LRRNT domain in the interval 56–92; the sequence is FFPFDLFSTCPFGCQCYSRVVHCSDLGLSSVPSNIPF. Disulfide bonds link cysteine 65-cysteine 71 and cysteine 69-cysteine 78. 11 LRR repeats span residues 93-114, 117-138, 141-163, 164-183, 186-209, 232-253, 256-277, 280-302, 303-324, 332-354, and 355-370; these read DTRMVDLQNNKIKEIKENDFKG, SLYALILNNNKLTKIHPKAFLT, KLRRLYLSHNQLSEIPLNLPKSL, AELRIHDNKVKKIQKATFKG, ALHVLEMSANPLDNNGIEPGAFEG, TLLELHLDYNKISVVELEDFKR, DLQRLGLGNNRITDIENGSLAN, RVREIHLENNKLKKVPSGLQELK, YLQIIFLHSNSITKVGVNDFCP, SLYSAISLSNNPVKYWEVQPATF, and RCVLSRMSVQLGNFRK. N-linked (GlcNAc...) asparagine glycosylation is present at asparagine 272. A disulfide bridge connects residues cysteine 323 and cysteine 356.

The protein belongs to the small leucine-rich proteoglycan (SLRP) family. SLRP class I subfamily.

The protein resides in the secreted. The protein localises to the extracellular space. It is found in the extracellular matrix. This Bos taurus (Bovine) protein is Asporin (ASPN).